The following is a 310-amino-acid chain: Protease HtpX homolog (310 aa).

The next 2 helical transmembrane spans lie at 7 to 27 (SVML…LIGG) and 29 to 49 (AGMT…YWYS). H131 is a Zn(2+) binding site. E132 is an active-site residue. Position 135 (H135) interacts with Zn(2+). The next 2 helical transmembrane spans lie at 141 to 161 (ILIG…ASMA) and 178 to 198 (PLGF…AALI). E207 lines the Zn(2+) pocket. Residues 277-310 (LTGARPQSGGAPSGPERTARNAEDSAKDFWDSLK) are disordered. The segment covering 293–310 (RTARNAEDSAKDFWDSLK) has biased composition (basic and acidic residues).

It belongs to the peptidase M48B family. The cofactor is Zn(2+).

The protein resides in the cell inner membrane. The sequence is that of Protease HtpX homolog from Desulfatibacillum aliphaticivorans.